Consider the following 218-residue polypeptide: Large ribosomal subunit protein bL25 (218 aa).

A disordered region spans residues 197 to 218 (PAEESGEKPVAHIEEKESTEKE). Residues 201-218 (SGEKPVAHIEEKESTEKE) are compositionally biased toward basic and acidic residues.

This sequence belongs to the bacterial ribosomal protein bL25 family. CTC subfamily. Part of the 50S ribosomal subunit; part of the 5S rRNA/L5/L18/L25 subcomplex. Contacts the 5S rRNA. Binds to the 5S rRNA independently of L5 and L18.

In terms of biological role, this is one of the proteins that binds to the 5S RNA in the ribosome where it forms part of the central protuberance. This chain is Large ribosomal subunit protein bL25, found in Dehalococcoides mccartyi (strain ATCC BAA-2100 / JCM 16839 / KCTC 5957 / BAV1).